We begin with the raw amino-acid sequence, 581 residues long: Cytosolic Fe-S cluster assembly factor nar-1 (581 aa).

Residues cysteine 20, cysteine 68, cysteine 71, cysteine 74, cysteine 215, cysteine 270, cysteine 457, and cysteine 461 each contribute to the [4Fe-4S] cluster site.

The protein belongs to the NARF family.

Its function is as follows. Component of the cytosolic Fe/S protein assembly machinery. Required for maturation of extramitochondrial Fe/S proteins. May play a role in the transfer of pre-assembled Fe/S clusters to target apoproteins. The protein is Cytosolic Fe-S cluster assembly factor nar-1 (nar-1) of Neurospora crassa (strain ATCC 24698 / 74-OR23-1A / CBS 708.71 / DSM 1257 / FGSC 987).